Reading from the N-terminus, the 385-residue chain is MNFTKIAVSAGCILALCAGCGANDTSSTKEKASSEKSGVTKEITASVNKMETIISKLNDSVEKGDQKEIEKKGKELNSYWLSFENDIRSDYPFEYTEIEKHLQPIYTEAQKDKPDAGKIKTESESLKASLEDLTEAKKSGKKASDQLAKAADEYKGYVKEQSDQLVKATEAFTGAVKSGDIEKSKTLYAKARVYYERIEPIAESLGDLDPKIDARENDVEEGDKWTGFHKLEKAIWKDQDISGEKATADQLLKDVKELDGSIQSLKLTPEQIVAGAMELLNEAGISKITGEEERYSRIDLVDLMANVEGSEAVYQTVKSALVKDHSDLTEKLDTEFSEFEVLMAKYKTNDQSYTSYDKLSEKQIRELSTKLTTLSETMSKIANVL.

The signal sequence occupies residues 1–22 (MNFTKIAVSAGCILALCAGCGA).

This sequence belongs to the EfeM/EfeO family. In terms of assembly, component of the iron transporter efeUOB/M complex composed of EfeU, EfeM and EfeB; EfeU is essential for the complex formation.

The protein resides in the cell membrane. It is found in the membrane raft. Functionally, part of the iron transporter system efeUOB/M involved in iron import. Specifically binds Fe(3+), which is produced by EfeB-mediated oxidation of Fe(2+), and delivers it to the cell membrane permease EfeU. This is Iron uptake system component EfeM from Bacillus subtilis (strain 168).